Reading from the N-terminus, the 206-residue chain is Pyridoxal 5'-phosphate synthase subunit PdxT (206 aa).

59–61 is a binding site for L-glutamine; it reads GES. Cys-91 (nucleophile) is an active-site residue. L-glutamine is bound by residues Arg-123 and 151 to 152; that span reads IR. Active-site charge relay system residues include His-187 and Glu-189.

The protein belongs to the glutaminase PdxT/SNO family. In terms of assembly, in the presence of PdxS, forms a dodecamer of heterodimers. Only shows activity in the heterodimer.

The enzyme catalyses aldehydo-D-ribose 5-phosphate + D-glyceraldehyde 3-phosphate + L-glutamine = pyridoxal 5'-phosphate + L-glutamate + phosphate + 3 H2O + H(+). It carries out the reaction L-glutamine + H2O = L-glutamate + NH4(+). The protein operates within cofactor biosynthesis; pyridoxal 5'-phosphate biosynthesis. Catalyzes the hydrolysis of glutamine to glutamate and ammonia as part of the biosynthesis of pyridoxal 5'-phosphate. The resulting ammonia molecule is channeled to the active site of PdxS. The polypeptide is Pyridoxal 5'-phosphate synthase subunit PdxT (Mycobacterium sp. (strain KMS)).